The primary structure comprises 110 residues: Large ribosomal subunit protein uL22 (110 aa).

It belongs to the universal ribosomal protein uL22 family. Part of the 50S ribosomal subunit.

Functionally, this protein binds specifically to 23S rRNA; its binding is stimulated by other ribosomal proteins, e.g. L4, L17, and L20. It is important during the early stages of 50S assembly. It makes multiple contacts with different domains of the 23S rRNA in the assembled 50S subunit and ribosome. In terms of biological role, the globular domain of the protein is located near the polypeptide exit tunnel on the outside of the subunit, while an extended beta-hairpin is found that lines the wall of the exit tunnel in the center of the 70S ribosome. This Syntrophus aciditrophicus (strain SB) protein is Large ribosomal subunit protein uL22.